The following is a 356-amino-acid chain: Protein MGF 360-3L (356 aa).

An ANK repeat occupies 61–93 (KLNTALVLAVKENNEDLIMLFTEWGANINYGLL).

The protein belongs to the asfivirus MGF 360 family.

In terms of biological role, plays a role in virus cell tropism, and may be required for efficient virus replication in macrophages. This is Protein MGF 360-3L from African swine fever virus (isolate Warthog/Namibia/Wart80/1980) (ASFV).